The chain runs to 708 residues: tRNA(Met) cytidine acetyltransferase TmcA (708 aa).

ATP contacts are provided by residues Gln189, 215–224 (GRGKTSALGL), and Arg357. The 177-residue stretch at 398 to 574 (PECVEQPERL…YSLLMVRGEH (177 aa)) folds into the N-acetyltransferase domain. Residues 502–504 (IAV) and 509–515 (QRQGIGS) contribute to the acetyl-CoA site.

This sequence belongs to the RNA cytidine acetyltransferase family. TmcA subfamily.

It localises to the cytoplasm. It carries out the reaction cytidine(34) in elongator tRNA(Met) + acetyl-CoA + ATP + H2O = N(4)-acetylcytidine(34) in elongator tRNA(Met) + ADP + phosphate + CoA + H(+). Functionally, catalyzes the formation of N(4)-acetylcytidine (ac(4)C) at the wobble position of tRNA(Met), by using acetyl-CoA as an acetyl donor and ATP (or GTP). The protein is tRNA(Met) cytidine acetyltransferase TmcA of Vibrio cholerae serotype O1 (strain ATCC 39315 / El Tor Inaba N16961).